A 364-amino-acid chain; its full sequence is MNNNTYHIAILPGDGIGPEIMQQAYKILNTVKNKFKINIITTEYKVGGNALDLEGSPLPKDTIKNCEKSNAILFGAVGGPKWNNINETSRPEFGALLTLRKHFNLFINLRPIYLPIELINLSPLKPEIISQGLDMICIRELIGGIYFGKPQGKSGIRSQEHAFDTAIYHRFEIERIAHFAFKLAQKRRKHVTSIDKANVLHTSMLWRKVVSEVASNYPNVHLQHLYVDNASMQLIRNPSAFDVILCPNLFGDILSDECAEINGSIGILPSASLNEHNFGLYEPAGGSAPDIAGKNIANPIAQILSTALLFRYSLKLNHVAITIEKAVYKALTLGYRTQDIAYNKQKSVNTDDMGDIIASLIYKL.

NAD(+) is bound at residue Gly79–Glu92. Substrate is bound by residues Arg100, Arg110, Arg139, and Asp228. Mg(2+) contacts are provided by Asp228, Asp252, and Asp256. Gly286–Asn298 contributes to the NAD(+) binding site.

It belongs to the isocitrate and isopropylmalate dehydrogenases family. LeuB type 1 subfamily. Homodimer. The cofactor is Mg(2+). It depends on Mn(2+) as a cofactor.

The protein resides in the cytoplasm. The catalysed reaction is (2R,3S)-3-isopropylmalate + NAD(+) = 4-methyl-2-oxopentanoate + CO2 + NADH. Its pathway is amino-acid biosynthesis; L-leucine biosynthesis; L-leucine from 3-methyl-2-oxobutanoate: step 3/4. Functionally, catalyzes the oxidation of 3-carboxy-2-hydroxy-4-methylpentanoate (3-isopropylmalate) to 3-carboxy-4-methyl-2-oxopentanoate. The product decarboxylates to 4-methyl-2 oxopentanoate. In Blochmanniella floridana, this protein is 3-isopropylmalate dehydrogenase.